Reading from the N-terminus, the 969-residue chain is Surface protein P113 (969 aa).

An N-terminal signal peptide occupies residues 1–22 (MKIPFFILHILLLQFLLCLIRC). A glycan (N-linked (GlcNAc...) asparagine) is linked at Asn-207. The segment at 223–328 (IGDESTDSSS…TDTLVNNKEN (106 aa)) is disordered. Residues 229-241 (DSSSMEIQDSTSN) are compositionally biased toward polar residues. An N-linked (GlcNAc...) asparagine glycan is attached at Asn-268. The span at 300-311 (KNEDNKDLEHGS) shows a compositional bias: basic and acidic residues. Positions 312-325 (SNDVNNNTDTLVNN) are enriched in low complexity. 4 N-linked (GlcNAc...) asparagine glycosylation sites follow: Asn-317, Asn-360, Asn-661, and Asn-697. Over residues 688 to 705 (SSNFNIFDSNNTDQNNEQ) the composition is skewed to polar residues. Positions 688–947 (SSNFNIFDSN…NETNKTDNGS (260 aa)) are disordered. Over residues 713-727 (QLLNNNNDDVLSESN) the composition is skewed to low complexity. The span at 728-749 (NENKEKTSDDATHKETQEKSDQ) shows a compositional bias: basic and acidic residues. The N-linked (GlcNAc...) asparagine glycan is linked to Asn-779. Residues 798-811 (EGTEELQQNDEDAE) show a composition bias toward acidic residues. The segment covering 812-822 (SLTKENSKSEE) has biased composition (basic and acidic residues). The segment covering 823–841 (QENEDSTDAEAIDKEEVET) has biased composition (acidic residues). Residues 842 to 854 (EEKGKDEQKKDEQ) are compositionally biased toward basic and acidic residues. Positions 855 to 864 (KEQDEEEDGE) are enriched in acidic residues. A glycan (N-linked (GlcNAc...) asparagine) is linked at Asn-876. Residues 883-896 (EENKNEVKGEEHLQ) show a composition bias toward basic and acidic residues. Residues 897-907 (GSEQSIEASES) show a composition bias toward low complexity. The segment covering 908–917 (SQKDETKETE) has biased composition (basic and acidic residues). The span at 918–936 (DKEEYVNANDDESSEEDTT) shows a compositional bias: acidic residues. Positions 937–947 (PNETNKTDNGS) are enriched in polar residues. N-linked (GlcNAc...) asparagine glycosylation is found at Asn-938, Asn-941, and Asn-945. Asn-945 carries GPI-anchor amidated asparagine lipidation. A propeptide spans 946–969 (GSSFFFAMSNALLVILLLLFIEFL) (removed in mature form).

In terms of assembly, forms a complex composed of RH5, P113 and human BSG/basigin; the complex bridges the merozoite and host erythrocyte membranes. Within the complex, interacts with RH5 (via N-terminus); the interaction tethers RH5 to the merozoite membrane.

The protein localises to the cell membrane. Functionally, membrane receptor which tethers secreted RH5 to the merozoite membrane during merozoite invasion of host erythocytes. This Plasmodium falciparum (isolate 3D7) protein is Surface protein P113.